The primary structure comprises 207 residues: Guanylate kinase (207 aa).

Residues 6–185 (GLLIVLSGPS…AKNRIQCIVE (180 aa)) enclose the Guanylate kinase-like domain. Residue 13-20 (GPSGVGKG) coordinates ATP.

This sequence belongs to the guanylate kinase family.

Its subcellular location is the cytoplasm. The catalysed reaction is GMP + ATP = GDP + ADP. In terms of biological role, essential for recycling GMP and indirectly, cGMP. The sequence is that of Guanylate kinase from Staphylococcus aureus (strain bovine RF122 / ET3-1).